The sequence spans 340 residues: Ketol-acid reductoisomerase (NADP(+)) (340 aa).

The KARI N-terminal Rossmann domain maps to 3 to 182 (VTMYYEEDVE…GCARVGIIET (180 aa)). Residues 26–29 (YGSQ), R49, S53, and 83–86 (DELQ) each bind NADP(+). The active site involves H108. An NADP(+)-binding site is contributed by G134. One can recognise a KARI C-terminal knotted domain in the interval 183–328 (TFKEETEEDL…AELRKAMPFT (146 aa)). Mg(2+) contacts are provided by D191, E195, E227, and E231. A substrate-binding site is contributed by S252.

This sequence belongs to the ketol-acid reductoisomerase family. Mg(2+) serves as cofactor.

The enzyme catalyses (2R)-2,3-dihydroxy-3-methylbutanoate + NADP(+) = (2S)-2-acetolactate + NADPH + H(+). It catalyses the reaction (2R,3R)-2,3-dihydroxy-3-methylpentanoate + NADP(+) = (S)-2-ethyl-2-hydroxy-3-oxobutanoate + NADPH + H(+). The protein operates within amino-acid biosynthesis; L-isoleucine biosynthesis; L-isoleucine from 2-oxobutanoate: step 2/4. It functions in the pathway amino-acid biosynthesis; L-valine biosynthesis; L-valine from pyruvate: step 2/4. Functionally, involved in the biosynthesis of branched-chain amino acids (BCAA). Catalyzes an alkyl-migration followed by a ketol-acid reduction of (S)-2-acetolactate (S2AL) to yield (R)-2,3-dihydroxy-isovalerate. In the isomerase reaction, S2AL is rearranged via a Mg-dependent methyl migration to produce 3-hydroxy-3-methyl-2-ketobutyrate (HMKB). In the reductase reaction, this 2-ketoacid undergoes a metal-dependent reduction by NADPH to yield (R)-2,3-dihydroxy-isovalerate. The chain is Ketol-acid reductoisomerase (NADP(+)) from Lactococcus lactis subsp. cremoris (strain MG1363).